The chain runs to 983 residues: Nitrate reductase [NADPH] (983 aa).

Low complexity-rich tracts occupy residues 1–14 and 26–48; these read MTIS…SSKT and SSSS…SSPT. Residues 1-50 form a disordered region; sequence MTISTTSSSTSSKTSSEKGDDLKGFSSSSSPASSRSSSATTPEPSSPTVL. Cysteine 184 is a Mo-molybdopterin binding site. In terms of domain architecture, Cytochrome b5 heme-binding spans 585–662; it reads DTIITAADLA…LRDFHLGRLE (78 aa). Positions 622 and 645 each coordinate heme. One can recognise an FAD-binding FR-type domain in the interval 688–815; sequence KKWRATRLVS…KGPLGSFTYL (128 aa). FAD is bound by residues 746–749, 763–767, phenylalanine 768, phenylalanine 780, 784–786, serine 841, and threonine 844; these read RAYT, LIKVY, and KMT. 952-961 contributes to the NADP(+) binding site; the sequence is LALVCGPPPM.

Belongs to the nitrate reductase family. Homodimer. It depends on FAD as a cofactor. The cofactor is heme. Mo-molybdopterin serves as cofactor.

It carries out the reaction nitrite + NADP(+) + H2O = nitrate + NADPH + H(+). Its pathway is nitrogen metabolism; nitrate reduction (assimilation). In terms of biological role, nitrate reductase is a key enzyme involved in the first step of nitrate assimilation in plants, fungi and bacteria. This Mycosarcoma maydis (Corn smut fungus) protein is Nitrate reductase [NADPH] (NAR1).